Consider the following 238-residue polypeptide: tRNA (guanine-N(7)-)-methyltransferase (238 aa).

S-adenosyl-L-methionine-binding residues include glutamate 68, glutamate 93, aspartate 120, and aspartate 143. Aspartate 143 is a catalytic residue. Substrate contacts are provided by residues lysine 147, aspartate 179, and 216–219; that span reads TKFE.

It belongs to the class I-like SAM-binding methyltransferase superfamily. TrmB family.

It catalyses the reaction guanosine(46) in tRNA + S-adenosyl-L-methionine = N(7)-methylguanosine(46) in tRNA + S-adenosyl-L-homocysteine. It participates in tRNA modification; N(7)-methylguanine-tRNA biosynthesis. Catalyzes the formation of N(7)-methylguanine at position 46 (m7G46) in tRNA. This Shewanella sp. (strain W3-18-1) protein is tRNA (guanine-N(7)-)-methyltransferase.